The following is a 172-amino-acid chain: Nucleoside-triphosphatase THEP1 (172 aa).

ATP contacts are provided by residues 11-18 and 101-108; these read GKPGIGKT and IILIDEIG.

This sequence belongs to the THEP1 NTPase family.

It carries out the reaction a ribonucleoside 5'-triphosphate + H2O = a ribonucleoside 5'-diphosphate + phosphate + H(+). Has nucleotide phosphatase activity towards ATP, GTP, CTP, TTP and UTP. May hydrolyze nucleoside diphosphates with lower efficiency. This Sulfolobus acidocaldarius (strain ATCC 33909 / DSM 639 / JCM 8929 / NBRC 15157 / NCIMB 11770) protein is Nucleoside-triphosphatase THEP1.